Reading from the N-terminus, the 298-residue chain is Urease accessory protein UreD (298 aa).

Belongs to the UreD family. As to quaternary structure, ureD, UreF and UreG form a complex that acts as a GTP-hydrolysis-dependent molecular chaperone, activating the urease apoprotein by helping to assemble the nickel containing metallocenter of UreC. The UreE protein probably delivers the nickel.

It is found in the cytoplasm. Required for maturation of urease via the functional incorporation of the urease nickel metallocenter. This is Urease accessory protein UreD from Frankia alni (strain DSM 45986 / CECT 9034 / ACN14a).